Consider the following 896-residue polypeptide: Alanine--tRNA ligase (896 aa).

Zn(2+) is bound by residues His-574, His-578, Cys-677, and His-681.

This sequence belongs to the class-II aminoacyl-tRNA synthetase family. It depends on Zn(2+) as a cofactor.

Its subcellular location is the cytoplasm. The enzyme catalyses tRNA(Ala) + L-alanine + ATP = L-alanyl-tRNA(Ala) + AMP + diphosphate. Catalyzes the attachment of alanine to tRNA(Ala) in a two-step reaction: alanine is first activated by ATP to form Ala-AMP and then transferred to the acceptor end of tRNA(Ala). Also edits incorrectly charged Ser-tRNA(Ala) and Gly-tRNA(Ala) via its editing domain. The polypeptide is Alanine--tRNA ligase (Mycoplasma mycoides subsp. mycoides SC (strain CCUG 32753 / NCTC 10114 / PG1)).